A 247-amino-acid polypeptide reads, in one-letter code: Uridylate kinase (247 aa).

15-18 is a binding site for ATP; that stretch reads KLSG. The tract at residues 23-28 is involved in allosteric activation by GTP; that stretch reads GEEGFG. Glycine 57 provides a ligand contact to UMP. 2 residues coordinate ATP: glycine 58 and arginine 62. Residues aspartate 77 and 138 to 145 each bind UMP; that span reads TGNPFCTT. The ATP site is built by threonine 165, tyrosine 171, and aspartate 174.

This sequence belongs to the UMP kinase family. In terms of assembly, homohexamer.

The protein resides in the cytoplasm. It carries out the reaction UMP + ATP = UDP + ADP. Its pathway is pyrimidine metabolism; CTP biosynthesis via de novo pathway; UDP from UMP (UMPK route): step 1/1. Allosterically activated by GTP. Inhibited by UTP. Catalyzes the reversible phosphorylation of UMP to UDP. In Shewanella loihica (strain ATCC BAA-1088 / PV-4), this protein is Uridylate kinase.